The following is a 146-amino-acid chain: Large ribosomal subunit protein uL15 (146 aa).

The segment at 1-57 (MKLFELQPAPGSKKLPKRKGRGHGTGNGKTAGRGHKGQNARSGGGVRPGFEGGQMPL) is disordered. Gly residues predominate over residues 42-52 (SGGGVRPGFEG).

This sequence belongs to the universal ribosomal protein uL15 family. In terms of assembly, part of the 50S ribosomal subunit.

Functionally, binds to the 23S rRNA. The chain is Large ribosomal subunit protein uL15 from Acetivibrio thermocellus (strain ATCC 27405 / DSM 1237 / JCM 9322 / NBRC 103400 / NCIMB 10682 / NRRL B-4536 / VPI 7372) (Clostridium thermocellum).